The chain runs to 121 residues: Phosphoribosyl-AMP cyclohydrolase (121 aa).

D74 provides a ligand contact to Mg(2+). C75 provides a ligand contact to Zn(2+). Mg(2+)-binding residues include D76 and D78. 2 residues coordinate Zn(2+): C91 and C98.

It belongs to the PRA-CH family. In terms of assembly, homodimer. Mg(2+) serves as cofactor. Zn(2+) is required as a cofactor.

The protein localises to the cytoplasm. It carries out the reaction 1-(5-phospho-beta-D-ribosyl)-5'-AMP + H2O = 1-(5-phospho-beta-D-ribosyl)-5-[(5-phospho-beta-D-ribosylamino)methylideneamino]imidazole-4-carboxamide. It participates in amino-acid biosynthesis; L-histidine biosynthesis; L-histidine from 5-phospho-alpha-D-ribose 1-diphosphate: step 3/9. Its function is as follows. Catalyzes the hydrolysis of the adenine ring of phosphoribosyl-AMP. The polypeptide is Phosphoribosyl-AMP cyclohydrolase (Methanothrix thermoacetophila (strain DSM 6194 / JCM 14653 / NBRC 101360 / PT) (Methanosaeta thermophila)).